A 138-amino-acid chain; its full sequence is Small ribosomal subunit protein uS11c (138 aa).

It belongs to the universal ribosomal protein uS11 family. Part of the 30S ribosomal subunit.

The protein localises to the plastid. The protein is Small ribosomal subunit protein uS11c of Cuscuta obtusiflora (Peruvian dodder).